We begin with the raw amino-acid sequence, 65 residues long: Large ribosomal subunit protein bL35 (65 aa).

Residues 1 to 26 (MPKIKTLRSAAKRFKKTESGKFKRKQ) are disordered.

The protein belongs to the bacterial ribosomal protein bL35 family.

The protein is Large ribosomal subunit protein bL35 of Buchnera aphidicola subsp. Baizongia pistaciae (strain Bp).